We begin with the raw amino-acid sequence, 176 residues long: Ribosome maturation factor RimM (176 aa).

The PRC barrel domain maps to 97-176 (EDEFYWRDLI…QILVDWDPDF (80 aa)).

It belongs to the RimM family. In terms of assembly, binds ribosomal protein uS19.

The protein localises to the cytoplasm. Functionally, an accessory protein needed during the final step in the assembly of 30S ribosomal subunit, possibly for assembly of the head region. Essential for efficient processing of 16S rRNA. May be needed both before and after RbfA during the maturation of 16S rRNA. It has affinity for free ribosomal 30S subunits but not for 70S ribosomes. The protein is Ribosome maturation factor RimM of Shewanella halifaxensis (strain HAW-EB4).